The chain runs to 213 residues: KHG/KDPG aldolase (213 aa).

Catalysis depends on Glu-45, which acts as the Proton acceptor. Pyruvate is bound by residues Arg-49, Thr-73, and Lys-133. Lys-133 acts as the Schiff-base intermediate with substrate in catalysis.

This sequence belongs to the KHG/KDPG aldolase family. Homotrimer.

The protein localises to the cytoplasm. It carries out the reaction 2-dehydro-3-deoxy-6-phospho-D-gluconate = D-glyceraldehyde 3-phosphate + pyruvate. The enzyme catalyses (4S)-4-hydroxy-2-oxoglutarate = glyoxylate + pyruvate. It functions in the pathway carbohydrate acid metabolism; 2-dehydro-3-deoxy-D-gluconate degradation; D-glyceraldehyde 3-phosphate and pyruvate from 2-dehydro-3-deoxy-D-gluconate: step 2/2. Its pathway is carbohydrate metabolism; glyoxylate and dicarboxylate metabolism. Its function is as follows. Involved in the degradation of glucose via the Entner-Doudoroff pathway. Catalyzes the reversible, stereospecific retro-aldol cleavage of 2-keto-3-deoxy-6-phosphogluconate (KDPG) to pyruvate and D-glyceraldehyde-3-phosphate. In addition to its KDPG aldolase activity, catalyzes the reversible cleavage of 2-keto-4-hydroxyglutarate (KHG) to glyoxylate and pyruvate. The enzyme is stereoselective for the S-enantiomer of KHG. Cleavage of KHG could serve in tricarboxylic acid (TCA) cycle regulation or, when operating in the reverse direction, in the detoxification of glyoxylate. The protein is KHG/KDPG aldolase (eda) of Escherichia coli O157:H7.